Reading from the N-terminus, the 719-residue chain is Anaphase-promoting complex subunit 4 (719 aa).

A WD repeat occupies 57–96; the sequence is NSQRIWDVDFHDLEATELCWNHDGNLIVVGFKNGELKIID.

In terms of assembly, the APC/C is composed of at least 13 subunits: apc1, apc2, nuc2, apc4, apc5, cut9, apc8, apc10, apc11, hcn1, apc13, apc14 and apc15. Interacts with apc1 and dim1.

Component of the anaphase-promoting complex/cyclosome (APC/C), a cell cycle-regulated E3 ubiquitin-protein ligase complex that controls progression through mitosis and the G1 phase of the cell cycle. The APC/C is thought to confer substrate specificity and, in the presence of ubiquitin-conjugating E2 enzymes, it catalyzes the formation of protein-ubiquitin conjugates that are subsequently degraded by the 26S proteasome. Has a role in promoting metaphase to anaphase transition via the ubiquitination of specific mitotic substrates. This Schizosaccharomyces pombe (strain 972 / ATCC 24843) (Fission yeast) protein is Anaphase-promoting complex subunit 4 (cut20).